The sequence spans 366 residues: Histidinol-phosphate aminotransferase 2 (366 aa).

Residues 1-11 (MQVKDQLSSLQ) are compositionally biased toward polar residues. The interval 1–21 (MQVKDQLSSLQPYKPGKSPEQ) is disordered. At lysine 222 the chain carries N6-(pyridoxal phosphate)lysine.

Belongs to the class-II pyridoxal-phosphate-dependent aminotransferase family. Histidinol-phosphate aminotransferase subfamily. As to quaternary structure, homodimer. Pyridoxal 5'-phosphate is required as a cofactor.

It catalyses the reaction L-histidinol phosphate + 2-oxoglutarate = 3-(imidazol-4-yl)-2-oxopropyl phosphate + L-glutamate. It participates in amino-acid biosynthesis; L-histidine biosynthesis; L-histidine from 5-phospho-alpha-D-ribose 1-diphosphate: step 7/9. This Bacillus cereus (strain ATCC 14579 / DSM 31 / CCUG 7414 / JCM 2152 / NBRC 15305 / NCIMB 9373 / NCTC 2599 / NRRL B-3711) protein is Histidinol-phosphate aminotransferase 2 (hisC2).